Reading from the N-terminus, the 353-residue chain is DNA polymerase IV (353 aa).

The UmuC domain occupies 6-187 (IIHIDCDCFY…LPVTKLHGVG (182 aa)). Mg(2+) is bound by residues Asp10 and Asp105. Glu106 is a catalytic residue.

The protein belongs to the DNA polymerase type-Y family. As to quaternary structure, monomer. It depends on Mg(2+) as a cofactor.

It is found in the cytoplasm. The catalysed reaction is DNA(n) + a 2'-deoxyribonucleoside 5'-triphosphate = DNA(n+1) + diphosphate. Functionally, poorly processive, error-prone DNA polymerase involved in untargeted mutagenesis. Copies undamaged DNA at stalled replication forks, which arise in vivo from mismatched or misaligned primer ends. These misaligned primers can be extended by PolIV. Exhibits no 3'-5' exonuclease (proofreading) activity. May be involved in translesional synthesis, in conjunction with the beta clamp from PolIII. The polypeptide is DNA polymerase IV (Pseudomonas savastanoi pv. phaseolicola (strain 1448A / Race 6) (Pseudomonas syringae pv. phaseolicola (strain 1448A / Race 6))).